The following is a 217-amino-acid chain: Protein-L-isoaspartate O-methyltransferase (217 aa).

The active site involves serine 64.

Belongs to the methyltransferase superfamily. L-isoaspartyl/D-aspartyl protein methyltransferase family.

The protein localises to the cytoplasm. It catalyses the reaction [protein]-L-isoaspartate + S-adenosyl-L-methionine = [protein]-L-isoaspartate alpha-methyl ester + S-adenosyl-L-homocysteine. Functionally, catalyzes the methyl esterification of L-isoaspartyl residues in peptides and proteins that result from spontaneous decomposition of normal L-aspartyl and L-asparaginyl residues. It plays a role in the repair and/or degradation of damaged proteins. This is Protein-L-isoaspartate O-methyltransferase from Nitrobacter winogradskyi (strain ATCC 25391 / DSM 10237 / CIP 104748 / NCIMB 11846 / Nb-255).